The sequence spans 75 residues: Small ribosomal subunit protein bS18 (75 aa).

This sequence belongs to the bacterial ribosomal protein bS18 family. Part of the 30S ribosomal subunit. Forms a tight heterodimer with protein bS6.

Binds as a heterodimer with protein bS6 to the central domain of the 16S rRNA, where it helps stabilize the platform of the 30S subunit. The polypeptide is Small ribosomal subunit protein bS18 (Pectobacterium atrosepticum (strain SCRI 1043 / ATCC BAA-672) (Erwinia carotovora subsp. atroseptica)).